The chain runs to 247 residues: Ubiquinone biosynthesis O-methyltransferase (247 aa).

Arginine 40, glycine 71, aspartate 92, and methionine 135 together coordinate S-adenosyl-L-methionine.

It belongs to the methyltransferase superfamily. UbiG/COQ3 family.

It carries out the reaction a 3-demethylubiquinol + S-adenosyl-L-methionine = a ubiquinol + S-adenosyl-L-homocysteine + H(+). It catalyses the reaction a 3-(all-trans-polyprenyl)benzene-1,2-diol + S-adenosyl-L-methionine = a 2-methoxy-6-(all-trans-polyprenyl)phenol + S-adenosyl-L-homocysteine + H(+). The protein operates within cofactor biosynthesis; ubiquinone biosynthesis. Its function is as follows. O-methyltransferase that catalyzes the 2 O-methylation steps in the ubiquinone biosynthetic pathway. The polypeptide is Ubiquinone biosynthesis O-methyltransferase (Ruegeria sp. (strain TM1040) (Silicibacter sp.)).